The chain runs to 104 residues: MIFTLLGLALVATKSACIAHVFILQLGALDMEALATPLAKVIATSARALHTRSLRASERDKCTNLTARSTRALLAHGPRLRHAVQQQAVAALFTIAVARRRRTA.

A signal peptide spans 1-19; the sequence is MIFTLLGLALVATKSACIA. The RxLR signature appears at 52–55; that stretch reads RSLR. An N-linked (GlcNAc...) asparagine glycan is attached at asparagine 64.

Belongs to the RxLR effector family.

The protein localises to the secreted. Its subcellular location is the host chloroplast envelope. The protein resides in the host mitochondrion. It localises to the host nucleus. It is found in the host cytoplasm. Functionally, secreted effector that completely suppresses the host cell death induced by cell death-inducing proteins. The protein is Secreted RxLR effector protein 54 of Plasmopara viticola (Downy mildew of grapevine).